The following is a 445-amino-acid chain: Bifunctional protein GlmU (445 aa).

The segment at 1–218 (MRALVLAAGK…LLEITGVNTR (218 aa)) is pyrophosphorylase. UDP-N-acetyl-alpha-D-glucosamine-binding positions include 6 to 9 (LAAG), Lys20, Gln69, 74 to 75 (GT), 96 to 98 (YGD), Gly134, Glu147, Asn162, and Asn216. Asp98 contributes to the Mg(2+) binding site. Asn216 provides a ligand contact to Mg(2+). Residues 219–239 (KTLVWLEEQLRMRKIEELLEN) are linker. The N-acetyltransferase stretch occupies residues 240 to 445 (GVTILDPATT…GWVLKKRKEE (206 aa)). UDP-N-acetyl-alpha-D-glucosamine is bound by residues Arg321 and Lys339. The Proton acceptor role is filled by His351. UDP-N-acetyl-alpha-D-glucosamine-binding residues include Tyr354 and Asn365. Residues Ala368, 374–375 (NY), Ser393, Ala411, and Arg428 contribute to the acetyl-CoA site.

The protein in the N-terminal section; belongs to the N-acetylglucosamine-1-phosphate uridyltransferase family. In the C-terminal section; belongs to the transferase hexapeptide repeat family. As to quaternary structure, homotrimer. Mg(2+) is required as a cofactor.

The protein resides in the cytoplasm. The catalysed reaction is alpha-D-glucosamine 1-phosphate + acetyl-CoA = N-acetyl-alpha-D-glucosamine 1-phosphate + CoA + H(+). The enzyme catalyses N-acetyl-alpha-D-glucosamine 1-phosphate + UTP + H(+) = UDP-N-acetyl-alpha-D-glucosamine + diphosphate. The protein operates within nucleotide-sugar biosynthesis; UDP-N-acetyl-alpha-D-glucosamine biosynthesis; N-acetyl-alpha-D-glucosamine 1-phosphate from alpha-D-glucosamine 6-phosphate (route II): step 2/2. It functions in the pathway nucleotide-sugar biosynthesis; UDP-N-acetyl-alpha-D-glucosamine biosynthesis; UDP-N-acetyl-alpha-D-glucosamine from N-acetyl-alpha-D-glucosamine 1-phosphate: step 1/1. It participates in bacterial outer membrane biogenesis; LPS lipid A biosynthesis. Functionally, catalyzes the last two sequential reactions in the de novo biosynthetic pathway for UDP-N-acetylglucosamine (UDP-GlcNAc). The C-terminal domain catalyzes the transfer of acetyl group from acetyl coenzyme A to glucosamine-1-phosphate (GlcN-1-P) to produce N-acetylglucosamine-1-phosphate (GlcNAc-1-P), which is converted into UDP-GlcNAc by the transfer of uridine 5-monophosphate (from uridine 5-triphosphate), a reaction catalyzed by the N-terminal domain. In Thermotoga sp. (strain RQ2), this protein is Bifunctional protein GlmU.